A 384-amino-acid chain; its full sequence is GTPase Obg (384 aa).

One can recognise an Obg domain in the interval 1–159; the sequence is MKFIDEAKIE…RSLQLELKVL (159 aa). Positions 20–46 are disordered; the sequence is ATSFRREKFVPRGGPDGGDGGKGGSVW. A compositionally biased stretch (gly residues) spans 33–43; that stretch reads GPDGGDGGKGG. Positions 160–348 constitute an OBG-type G domain; it reads ADVGLLGMPN…LVHQINQYLT (189 aa). GTP-binding positions include 166 to 173, 191 to 195, 213 to 216, 284 to 287, and 329 to 331; these read GMPNAGKS, FTTLH, DIPG, NKLD, and SAL. The Mg(2+) site is built by serine 173 and threonine 193.

This sequence belongs to the TRAFAC class OBG-HflX-like GTPase superfamily. OBG GTPase family. Monomer. Mg(2+) serves as cofactor.

Its subcellular location is the cytoplasm. In terms of biological role, an essential GTPase which binds GTP, GDP and possibly (p)ppGpp with moderate affinity, with high nucleotide exchange rates and a fairly low GTP hydrolysis rate. Plays a role in control of the cell cycle, stress response, ribosome biogenesis and in those bacteria that undergo differentiation, in morphogenesis control. The protein is GTPase Obg of Neisseria meningitidis serogroup B (strain ATCC BAA-335 / MC58).